We begin with the raw amino-acid sequence, 387 residues long: Signal-regulatory protein gamma (387 aa).

An N-terminal signal peptide occupies residues 1-28 (MPVPASWPHPPGPFLLLTLLLGLTEVAG). Residues 29–137 (EEELQMIQPE…ENVEFKSGPG (109 aa)) form the Ig-like V-type domain. Topologically, residues 29–360 (EEELQMIQPE…QKDQSSDATP (332 aa)) are extracellular. 2 cysteine pairs are disulfide-bonded: Cys-53–Cys-119 and Cys-168–Cys-226. Ig-like C1-type domains lie at 146-245 (PSAP…ANLS) and 252-340 (PTLE…LAVS). Residues Asn-243, Asn-268, Asn-309, and Asn-317 are each glycosylated (N-linked (GlcNAc...) asparagine). Cys-271 and Cys-329 form a disulfide bridge. Residues 361–383 (GPASSLTALLLIAVLLGPIYVPW) form a helical membrane-spanning segment. Over 384 to 387 (KQKT) the chain is Cytoplasmic.

As to quaternary structure, interacts with CD47. As to expression, detected in liver, and at very low levels in brain, heart, lung, pancreas, kidney, placenta and skeletal muscle. Expressed on CD4+ T-cells, CD8+ T-cells, CD56-bright natural killer (NK) cells, CD20+ cells, and all activated NK cells. Mainly present in the paracortical T-cell area of lymph nodes, with only sparse positive cells in the mantle and in the germinal center of B-cell follicles. In the thymus, primarily expressed in the medulla on mature T-lymphocytes that have undergone thymic selection.

The protein resides in the membrane. In terms of biological role, probable immunoglobulin-like cell surface receptor. On binding with CD47, mediates cell-cell adhesion. Engagement on T-cells by CD47 on antigen-presenting cells results in enhanced antigen-specific T-cell proliferation and costimulates T-cell activation. This Homo sapiens (Human) protein is Signal-regulatory protein gamma (SIRPG).